Reading from the N-terminus, the 401-residue chain is GRIP domain-containing protein C119.12 (401 aa).

The stretch at 7 to 296 forms a coiled coil; that stretch reads NETKLVENEN…TLLIGKLQHE (290 aa). Residues 315-366 enclose the GRIP domain; it reads NNAEKIDKQLISNLFVSFLTLPRADTKRFEILQLISSVLDWNDTQREQTGLQ.

Its subcellular location is the golgi apparatus lumen. The sequence is that of GRIP domain-containing protein C119.12 from Schizosaccharomyces pombe (strain 972 / ATCC 24843) (Fission yeast).